We begin with the raw amino-acid sequence, 189 residues long: GTPase HRas (189 aa).

10 to 17 (GAKGVGKS) contributes to the GTP binding site. Positions 32–40 (YDPTIEDSY) match the Effector region motif. GTP contacts are provided by residues 57–61 (DTAGQ) and 116–119 (NKCD). Residues C181 and C184 are each lipidated (S-palmitoyl cysteine; by host). Position 186 is a cysteine methyl ester; by host (C186). A lipid anchor (S-farnesyl cysteine; by host) is attached at C186. The propeptide at 187 to 189 (VLS) is removed in mature form.

This sequence belongs to the small GTPase superfamily. Ras family.

Its subcellular location is the host cell membrane. The enzyme catalyses GTP + H2O = GDP + phosphate + H(+). With respect to regulation, alternates between an inactive form bound to GDP and an active form bound to GTP. Activated by a guanine nucleotide-exchange factor (GEF) and inactivated by a GTPase-activating protein (GAP). This is GTPase HRas (H-RAS) from Moloney murine sarcoma virus (MoMSV).